Reading from the N-terminus, the 549-residue chain is MLNQKIQNPNPDELMIEVDLCYELDPYELKLDEMIEAEPEPEMIEGLPASDALTPADRYLELFEHVQSAKIFPDSKTFPDCAPKMDPLDILIRYRKVRRHRDFDLRKFVENHFWLPEVYSSEYVSDPQNSLKEHIDQLWPVLTREPQDHIPWSSLLALPQSYIVPGGRFSETYYWDSYFTMLGLAESGREDLLKCMADNFAWMIENYGHIPNGNRTYYLSRSQPPVFALMVELFEEDGVRGARRYLDHLKMEYAFWMDGAESLIPNQAYRHVVRMPDGSLLNRYWDDRDTPRDESWLEDVETAKHSGRPPNEVYRDLRAGAASGWDYSSRWLRDTGRLASIRTTQFIPIDLNAFLFKLESAIANISALKGEKETEALFRQKASARRDAVKRYLWDDENGIYRDYDWRREQLALFSAAAIVPLYVGMANHEQADRLANAVRSRLLTPGGILASEYETGEQWDKPNGWAPLQWMAIQGFKMYGDDLLGDEIARSWLKTVNQFYLEQHKLIEKYHIADGVPREGGGGEYPLQDGFGWTNGVVRRLIGLYGEP.

Residues R168, 175-176, N212, 221-223, 292-294, and G324 contribute to the substrate site; these read WD, RSQ, and RDE. Active-site proton donor/acceptor residues include D326 and E509. Substrate is bound at residue E525.

The protein belongs to the glycosyl hydrolase 37 family. Monomer.

It is found in the cytoplasm. The catalysed reaction is alpha,alpha-trehalose + H2O = alpha-D-glucose + beta-D-glucose. Its pathway is glycan degradation; trehalose degradation; D-glucose from alpha,alpha-trehalose: step 1/1. Functionally, hydrolyzes trehalose to glucose. Could be involved, in cells returning to low osmolarity conditions, in the utilization of the accumulated cytoplasmic trehalose, which was synthesized in response to high osmolarity. This is Cytoplasmic trehalase from Shigella boydii serotype 4 (strain Sb227).